The chain runs to 94 residues: Large ribosomal subunit protein bL27 (94 aa).

Residues Met1–Phe10 constitute a propeptide that is removed on maturation.

Belongs to the bacterial ribosomal protein bL27 family. In terms of processing, the N-terminus is cleaved by ribosomal processing cysteine protease Prp.

This is Large ribosomal subunit protein bL27 from Fusobacterium nucleatum subsp. nucleatum (strain ATCC 25586 / DSM 15643 / BCRC 10681 / CIP 101130 / JCM 8532 / KCTC 2640 / LMG 13131 / VPI 4355).